The chain runs to 262 residues: Steroid 5-alpha-reductase DET2 (262 aa).

6 helical membrane passes run 13-33 (CLLT…FLQA), 51-71 (IAWF…FPFG), 79-99 (SLLL…IYPL), 113-133 (FPIT…YIQA), 148-168 (WFWW…YINI), and 205-225 (AIEW…GFFL).

It belongs to the steroid 5-alpha reductase family.

It is found in the membrane. It catalyses the reaction a 3-oxo-5alpha-steroid + NADP(+) = a 3-oxo-Delta(4)-steroid + NADPH + H(+). The enzyme catalyses 5alpha-campestan-3-one + NADP(+) = campest-4-en-3-one + NADPH + H(+). It carries out the reaction (22S,24R)-22-hydroxy-5alpha-ergostan-3-one + NADP(+) = (22S)-22-hydroxycampest-4-en-3-one + NADPH + H(+). The catalysed reaction is 3-dehydro-6-deoxoteasterone + NADP(+) = (22R,23R)-22,23-dihydroxycampest-4-en-3-one + NADPH + H(+). It participates in plant hormone biosynthesis; brassinosteroid biosynthesis. Inhibited by the 4-azasteroids 4-MA. Functionally, involved in a reduction step in the biosynthesis of the plant steroid, brassinolide (BL); acts at the second step in brassinolide biosynthesis in the 5alpha-reduction of (24R)- 24-methylcholest-4-en-3-one, which is further modified to form campestanol. Can use progesterone, testosterone, androstenedione and campestenone as substrate. Also catalyzes the conversion of campest-4-en-3-one (campesta-4-en-3-one, 4-en-3-one) to campest-3-one (campesta-3-one, 3-one), of (22S,24R)-22-hydroxyergost-4-en-3-one (22-hydroxy-campesta-4-en-3-one, 22-OH-4-en-3-one) to (22S,24R)-22-hydroxy-5alpha-ergostan-3-one (22-hydroxy-campesta-3-one, 22-OH-3-one), and of (22R,23R)-22,23-dihydroxy-5alpha-campestan-3-one (22,23,diOH-4-en-3-one) to (22R,23R)-22,23-dihydroxycampest-4-en-3-one (6-deoxo3DT). Required for the brassinosteroid- (BR) dependent regulation of seed size and shape as well as embryo development. The chain is Steroid 5-alpha-reductase DET2 from Arabidopsis thaliana (Mouse-ear cress).